Here is a 214-residue protein sequence, read N- to C-terminus: Rac-like GTP-binding protein 1 (214 aa).

Residues 17-24 (GDGAVGKT), 20-25 (AVGKTC), Thr42, 64-68 (DTAGQ), Gly67, 122-125 (TKLD), 123-125 (KLD), and 164-165 (SK) each bind GTP. The short motif at 39–47 (YIPTVFDNF) is the Effector region element.

It belongs to the small GTPase superfamily. Rho family. In terms of assembly, may interact with MPK1/MAPK6. Binds to RBOHB, preferentially in the GTP-bound form. Interacts with CCR1 in a GTP-dependent manner. May be palmitoylated.

It is found in the cytoplasm. Its subcellular location is the membrane. In terms of biological role, small GTPase playing a general role in disease resistance signaling pathway. Acts downstream of heterotrimeric G protein alpha subunit. Regulates cell death and reactive oxygen species production, probably through NADPH oxidase. Also involved in sphingolipid elicitor (SE)-dependent defense signaling. Activates phytoalexin production and alters defense-related genes. Down-regulates metallothionein 2b, a reactive oxygen scavenger. May control lignin synthesis through regulation of both NADPH oxidase and CCR1 activities during defense responses. Stimulates lignin synthesis in suspension cell culture. This is Rac-like GTP-binding protein 1 (RAC1) from Oryza sativa subsp. japonica (Rice).